The primary structure comprises 235 residues: Large ribosomal subunit protein uL1 (235 aa).

It belongs to the universal ribosomal protein uL1 family. As to quaternary structure, part of the 50S ribosomal subunit.

Functionally, binds directly to 23S rRNA. The L1 stalk is quite mobile in the ribosome, and is involved in E site tRNA release. In terms of biological role, protein L1 is also a translational repressor protein, it controls the translation of the L11 operon by binding to its mRNA. This Paenarthrobacter aurescens (strain TC1) protein is Large ribosomal subunit protein uL1.